The primary structure comprises 468 residues: Zinc finger protein mex-5 (468 aa).

A compositionally biased stretch (low complexity) spans Met-1 to Thr-19. The interval Met-1–Pro-32 is disordered. At Thr-186 the chain carries Phosphothreonine; by mbk-2. The segment covering Asn-243–Gly-254 has biased composition (basic and acidic residues). A disordered region spans residues Asn-243–Pro-269. 2 consecutive C3H1-type zinc fingers follow at residues Asn-270–Lys-299 and Lys-314–Asp-344. The disordered stretch occupies residues Asp-414–Tyr-468. The span at Ser-451 to Glu-460 shows a compositional bias: polar residues. Phosphoserine is present on Ser-458.

Interacts (when phosphorylated on Thr-186) with plk-1 (via POLO box domain) and plk-2 (via POLO box domain). Phosphorylation on Ser-458 by par-1 promotes localization of the protein to the anterior cytoplasm of the zygote. Phosphorylation by mbk-1 appears to be required for subsequent phosphorylation by plk-1. In terms of tissue distribution, asymmetrically localized to the anterior of the zygote before mitotic division, then differentially distributed to the somatic blastomere precursor cells.

It is found in the cytoplasm. Its function is as follows. Functions with mex-6 to affect embryonic viability, establish soma germline asymmetry in embryos and establish plk-1, pie-1, mex-1, and pos-1 asymmetry in embryos. Also affects formation of intestinal cells. Binds to mRNA in vitro, and inhibits pgl-3-mediated P-granule formation, probably by competing with pgl-3 for binding to mRNA. Required for neg-1 expression in anterior blastomeres during embryogenesis. The sequence is that of Zinc finger protein mex-5 from Caenorhabditis elegans.